Reading from the N-terminus, the 301-residue chain is NDP-polyphosphate phosphotransferase 3 (301 aa).

Residues 1-12 show a composition bias toward basic and acidic residues; that stretch reads MNRNGSTKDPRR. The segment at 1 to 21 is disordered; sequence MNRNGSTKDPRRMTGAATGEI.

The protein belongs to the polyphosphate kinase 2 (PPK2) family. Class I subfamily. The cofactor is Mg(2+).

The enzyme catalyses [phosphate](n) + ATP = [phosphate](n+1) + ADP. The catalysed reaction is [phosphate](n) + CTP = [phosphate](n+1) + CDP. It catalyses the reaction [phosphate](n) + GTP = [phosphate](n+1) + GDP. It carries out the reaction [phosphate](n) + UTP = [phosphate](n+1) + UDP. In terms of biological role, uses inorganic polyphosphate (polyP) as a donor to convert NDP to NTP. PolyP hydrolysis is slightly faster with UDP, but it can also use ADP, GDP and CDP. The polypeptide is NDP-polyphosphate phosphotransferase 3 (Ruegeria pomeroyi (strain ATCC 700808 / DSM 15171 / DSS-3) (Silicibacter pomeroyi)).